The primary structure comprises 355 residues: 3-isopropylmalate dehydrogenase (355 aa).

NAD(+) is bound at residue 77–90 (GAKWDNLPREKRPE). 4 residues coordinate substrate: Arg-97, Arg-107, Arg-135, and Asp-220. Residues Asp-220, Asp-244, and Asp-248 each contribute to the Mg(2+) site. 277–289 (GSAPDIAGQGIAN) contributes to the NAD(+) binding site.

It belongs to the isocitrate and isopropylmalate dehydrogenases family. LeuB type 1 subfamily. Homodimer. Requires Mg(2+) as cofactor. It depends on Mn(2+) as a cofactor.

It is found in the cytoplasm. The catalysed reaction is (2R,3S)-3-isopropylmalate + NAD(+) = 4-methyl-2-oxopentanoate + CO2 + NADH. It participates in amino-acid biosynthesis; L-leucine biosynthesis; L-leucine from 3-methyl-2-oxobutanoate: step 3/4. Functionally, catalyzes the oxidation of 3-carboxy-2-hydroxy-4-methylpentanoate (3-isopropylmalate) to 3-carboxy-4-methyl-2-oxopentanoate. The product decarboxylates to 4-methyl-2 oxopentanoate. This is 3-isopropylmalate dehydrogenase from Sulfurimonas denitrificans (strain ATCC 33889 / DSM 1251) (Thiomicrospira denitrificans (strain ATCC 33889 / DSM 1251)).